An 81-amino-acid chain; its full sequence is Beta-catenin-interacting protein 1 (81 aa).

Residue Ser59 is modified to Phosphoserine.

Belongs to the CTNNBIP1 family. In terms of assembly, binds CTNNB1.

Its subcellular location is the cytoplasm. The protein localises to the nucleus. Prevents the interaction between CTNNB1 and TCF family members, and acts as a negative regulator of the Wnt signaling pathway. This chain is Beta-catenin-interacting protein 1 (CTNNBIP1), found in Homo sapiens (Human).